We begin with the raw amino-acid sequence, 309 residues long: Elongation factor Ts (309 aa).

Residues 82–85 (TDFV) are involved in Mg(2+) ion dislocation from EF-Tu.

The protein belongs to the EF-Ts family.

It is found in the cytoplasm. Its function is as follows. Associates with the EF-Tu.GDP complex and induces the exchange of GDP to GTP. It remains bound to the aminoacyl-tRNA.EF-Tu.GTP complex up to the GTP hydrolysis stage on the ribosome. This is Elongation factor Ts from Rickettsia akari (strain Hartford).